Consider the following 57-residue polypeptide: MPAIQPPLYPTFLLLILLSLIITLYVWIISTITYKTAVRHAALHQRSFSRWSLDHSL.

The Virion surface segment spans residues 1–8 (MPAIQPPL). Residues 9 to 29 (YPTFLLLILLSLIITLYVWII) form a helical membrane-spanning segment. At 30–57 (STITYKTAVRHAALHQRSFSRWSLDHSL) the chain is on the intravirion side.

This sequence belongs to the rubulavirus small hydrophobic protein family. As to quaternary structure, interacts with host TNFRSF1A, RIPK1 and IRAK1; these interactions interfere with host NF-kappa-B activation at the level of receptor complexes. Interacts with host protein UBQLN4.

It is found in the virion membrane. Its subcellular location is the host cell membrane. Functionally, plays a role in the inhibition of the host NF-kappa-B pathway. This inhibition occurs at the receptor level, by preventing the signaling of TNFR1 as well as IL-1R and TLR3. This chain is Small hydrophobic protein (SH), found in Mumps virus genotype B (strain Miyahara vaccine) (MuV).